Consider the following 1080-residue polypeptide: Isoleucine--tRNA ligase (1080 aa).

The short motif at 48-58 is the 'HIGH' region element; that stretch reads PYASGSIHLGT. The short motif at 628-632 is the 'KMSKS' region element; the sequence is KMSKS. An ATP-binding site is contributed by Lys-631.

The protein belongs to the class-I aminoacyl-tRNA synthetase family. IleS type 2 subfamily. As to quaternary structure, monomer. Zn(2+) is required as a cofactor.

The protein localises to the cytoplasm. The enzyme catalyses tRNA(Ile) + L-isoleucine + ATP = L-isoleucyl-tRNA(Ile) + AMP + diphosphate. Its function is as follows. Catalyzes the attachment of isoleucine to tRNA(Ile). As IleRS can inadvertently accommodate and process structurally similar amino acids such as valine, to avoid such errors it has two additional distinct tRNA(Ile)-dependent editing activities. One activity is designated as 'pretransfer' editing and involves the hydrolysis of activated Val-AMP. The other activity is designated 'posttransfer' editing and involves deacylation of mischarged Val-tRNA(Ile). In Methanopyrus kandleri (strain AV19 / DSM 6324 / JCM 9639 / NBRC 100938), this protein is Isoleucine--tRNA ligase.